Consider the following 434-residue polypeptide: Glutamyl-tRNA reductase (434 aa).

Residues 49–52, serine 107, 112–114, and glutamine 118 each bind substrate; these read TCNR and EPQ. Cysteine 50 serves as the catalytic Nucleophile. An NADP(+)-binding site is contributed by 187 to 192; the sequence is GAGETV.

This sequence belongs to the glutamyl-tRNA reductase family. In terms of assembly, homodimer.

It catalyses the reaction (S)-4-amino-5-oxopentanoate + tRNA(Glu) + NADP(+) = L-glutamyl-tRNA(Glu) + NADPH + H(+). It participates in porphyrin-containing compound metabolism; protoporphyrin-IX biosynthesis; 5-aminolevulinate from L-glutamyl-tRNA(Glu): step 1/2. Catalyzes the NADPH-dependent reduction of glutamyl-tRNA(Glu) to glutamate 1-semialdehyde (GSA). In Hydrogenovibrio crunogenus (strain DSM 25203 / XCL-2) (Thiomicrospira crunogena), this protein is Glutamyl-tRNA reductase.